Here is a 188-residue protein sequence, read N- to C-terminus: dTTP/UTP pyrophosphatase (188 aa).

The Proton acceptor role is filled by Asp-70.

The protein belongs to the Maf family. YhdE subfamily. The cofactor is a divalent metal cation.

The protein localises to the cytoplasm. The catalysed reaction is dTTP + H2O = dTMP + diphosphate + H(+). It carries out the reaction UTP + H2O = UMP + diphosphate + H(+). In terms of biological role, nucleoside triphosphate pyrophosphatase that hydrolyzes dTTP and UTP. May have a dual role in cell division arrest and in preventing the incorporation of modified nucleotides into cellular nucleic acids. The polypeptide is dTTP/UTP pyrophosphatase (Clostridium botulinum (strain Eklund 17B / Type B)).